A 347-amino-acid chain; its full sequence is Molybdenum cofactor biosynthesis bifunctional protein (347 aa).

Positions 1 to 158 are molybdenum cofactor biosynthesis protein C; the sequence is MFTHLDENQQ…EKTGGKADVS (158 aa). Residues 75 to 77 and 116 to 117 contribute to the substrate site; these read FCH and ME. Asp131 acts as the For MoaC activity in catalysis. The interval 159-347 is molybdenum cofactor guanylyltransferase; the sequence is QTPLYGLVLT…NSPEDYGQIN (189 aa). GTP contacts are provided by residues 167–169, Lys179, Asp226, and Asp255; that span reads LTG. Residue Asp255 coordinates Mg(2+).

This sequence in the N-terminal section; belongs to the MoaC family. It in the C-terminal section; belongs to the MobA family. Mg(2+) is required as a cofactor.

The protein localises to the cytoplasm. It carries out the reaction Mo-molybdopterin + GTP + H(+) = Mo-molybdopterin guanine dinucleotide + diphosphate. The enzyme catalyses (8S)-3',8-cyclo-7,8-dihydroguanosine 5'-triphosphate = cyclic pyranopterin phosphate + diphosphate. The protein operates within cofactor biosynthesis; molybdopterin biosynthesis. In terms of biological role, catalyzes the conversion of (8S)-3',8-cyclo-7,8-dihydroguanosine 5'-triphosphate to cyclic pyranopterin monophosphate (cPMP). Transfers a GMP moiety from GTP to Mo-molybdopterin (Mo-MPT) cofactor (Moco or molybdenum cofactor) to form Mo-molybdopterin guanine dinucleotide (Mo-MGD) cofactor. This is Molybdenum cofactor biosynthesis bifunctional protein (moaC/mobA) from Synechocystis sp. (strain ATCC 27184 / PCC 6803 / Kazusa).